An 833-amino-acid polypeptide reads, in one-letter code: Neurogenic locus protein delta (833 aa).

The first 18 residues, 1–18 (MHWIKCLLTAFICFTVIV), serve as a signal peptide directing secretion. Over 19–594 (QVHSSGSFEL…ARADGLTNAQ (576 aa)) the chain is Extracellular. Intrachain disulfides connect C46-C61 and C68-C82. N-linked (GlcNAc...) asparagine glycans are attached at residues N98, N137, and N167. Positions 182–226 (VTCDLNYYGSGCAKFCRPRDDSFGHSTCSETGEIICLTGWQGDYC) constitute a DSL domain. 30 disulfides stabilise this stretch: C184–C193, C197–C209, C217–C226, C231–C240, C235–C246, C248–C257, C260–C271, C266–C277, C279–C288, C295–C307, C301–C317, C319–C328, C335–C348, C342–C360, C362–C371, C378–C388, C383–C404, C406–C415, C422–C433, C427–C439, C441–C450, C457–C468, C462–C477, C479–C488, C495–C506, C500–C515, C517–C526, C533–C544, C538–C553, and C555–C564. 6 EGF-like domains span residues 227-258 (HIPK…ALCN), 256-289 (LCNE…LYCN), 291-329 (DLNY…DDCE), 331-372 (EIYS…KMCE), 374-416 (KVLT…PNCD), and 418-451 (QLDN…TRCE). The EGF-like 7; calcium-binding domain maps to 453 to 489 (NIDDCLGHQCENGGTCIDMVNQYRCQCVPGFHGTHCS). Positions 491–527 (KVDLCLIRPCANGGTCLNLNNDYQCTCRAGFTGKDCS) constitute an EGF-like 8 domain. An EGF-like 9; calcium-binding domain is found at 529 to 565 (DIDECSSGPCHNGGTCMNRVNSFECVCANGFRGKQCD). Residues 595-617 (VVLIAVFSVAMPLVAVIAACVVF) form a helical membrane-spanning segment. Residues 618 to 833 (CMKRKRKRAQ…RSVVCGTPHM (216 aa)) lie on the Cytoplasmic side of the membrane. Position 666 is a phosphothreonine (T666). A disordered region spans residues 743-773 (QLNTDPTLMHRGSPAGSSAKGASGGGPGAAE). Low complexity predominate over residues 754-763 (GSPAGSSAKG).

In terms of assembly, interacts with Notch (N) via the EGF repeats and the N EGF repeats. Ubiquitinated by Mib, leading to its endocytosis and subsequent degradation. Detected in all areas with neurogenic abilities, for example the neurogenic ectoderm and the primordia of the sense organs. Later expression is restricted to those cells that have adopted a neural fate.

The protein localises to the membrane. In terms of biological role, acts as a ligand for Notch (N) receptor. Essential for proper differentiation of ectoderm. Delta is required for the correct separation of neural and epidermal cell lineages. Fringe (fng) acts in the Golgi to determine the type of O-linked fucose on the EGF modules in N, altering the ability of N to bind with Delta. O-fut1 also has a role in modulating the interaction. This Drosophila melanogaster (Fruit fly) protein is Neurogenic locus protein delta.